The sequence spans 137 residues: Putative pre-16S rRNA nuclease (137 aa).

It belongs to the YqgF nuclease family.

The protein localises to the cytoplasm. Could be a nuclease involved in processing of the 5'-end of pre-16S rRNA. The sequence is that of Putative pre-16S rRNA nuclease from Clostridium kluyveri (strain NBRC 12016).